The sequence spans 153 residues: Cell division protein SepF (153 aa).

This sequence belongs to the SepF family. Homodimer. Interacts with FtsZ.

The protein localises to the cytoplasm. Functionally, cell division protein that is part of the divisome complex and is recruited early to the Z-ring. Probably stimulates Z-ring formation, perhaps through the cross-linking of FtsZ protofilaments. Its function overlaps with FtsA. In Clostridium novyi (strain NT), this protein is Cell division protein SepF.